The primary structure comprises 756 residues: NUT family member 2F (756 aa).

Disordered stretches follow at residues 173 to 200 (GNAR…PDDS), 293 to 438 (IQKS…TSDP), 511 to 639 (RAAP…LPGM), and 653 to 756 (RLSQ…HCSQ). Residues 304 to 321 (SLPPPAPPRLEPRGPPAP) are compositionally biased toward pro residues. Positions 417-427 (EGQREKGKVEQ) are enriched in basic and acidic residues. Residues 543-560 (QRVSVETSPPQTAAQDPQ) are compositionally biased toward polar residues. Low complexity predominate over residues 654 to 665 (LSQSPVPSSGLL). The span at 746–756 (SRRKKKRHCSQ) shows a compositional bias: basic residues.

The protein belongs to the NUT family.

This is NUT family member 2F (NUTM2F) from Homo sapiens (Human).